The following is a 20-amino-acid chain: Agglutinin beta-3 chain (20 aa).

Belongs to the jacalin lectin family. As to quaternary structure, tetramer of four alpha chains associated with two or four beta chains.

Functionally, D-galactose-specific lectin, binds the T-antigen structure Gal-beta1,3-GalNAc (Thomsen-Friedenreich-antigen-specific lectin). Potent and selective stimulant of distinct T- and B-cell functions. Shows a unique ability to specifically recognize IgA-1 from human serum. The protein is Agglutinin beta-3 chain of Artocarpus integer (Jack fruit).